Consider the following 194-residue polypeptide: Peptidyl-tRNA hydrolase (194 aa).

TRNA is bound at residue Tyr16. The Proton acceptor role is filled by His21. TRNA contacts are provided by Tyr67, Asn69, and Asn115.

Belongs to the PTH family. As to quaternary structure, monomer.

Its subcellular location is the cytoplasm. The enzyme catalyses an N-acyl-L-alpha-aminoacyl-tRNA + H2O = an N-acyl-L-amino acid + a tRNA + H(+). Functionally, hydrolyzes ribosome-free peptidyl-tRNAs (with 1 or more amino acids incorporated), which drop off the ribosome during protein synthesis, or as a result of ribosome stalling. In terms of biological role, catalyzes the release of premature peptidyl moieties from peptidyl-tRNA molecules trapped in stalled 50S ribosomal subunits, and thus maintains levels of free tRNAs and 50S ribosomes. This Synechocystis sp. (strain ATCC 27184 / PCC 6803 / Kazusa) protein is Peptidyl-tRNA hydrolase.